Consider the following 257-residue polypeptide: Triosephosphate isomerase (257 aa).

9-11 (NWK) is a binding site for substrate. Catalysis depends on histidine 97, which acts as the Electrophile. Glutamate 169 functions as the Proton acceptor in the catalytic mechanism. Residues glycine 175, serine 214, and 235-236 (GG) contribute to the substrate site.

This sequence belongs to the triosephosphate isomerase family. Homodimer.

It is found in the cytoplasm. It carries out the reaction D-glyceraldehyde 3-phosphate = dihydroxyacetone phosphate. The protein operates within carbohydrate biosynthesis; gluconeogenesis. It functions in the pathway carbohydrate degradation; glycolysis; D-glyceraldehyde 3-phosphate from glycerone phosphate: step 1/1. Its function is as follows. Involved in the gluconeogenesis. Catalyzes stereospecifically the conversion of dihydroxyacetone phosphate (DHAP) to D-glyceraldehyde-3-phosphate (G3P). This chain is Triosephosphate isomerase, found in Vibrio cholerae serotype O1 (strain ATCC 39315 / El Tor Inaba N16961).